A 245-amino-acid polypeptide reads, in one-letter code: UDP-N-acetyl-D-mannosaminuronic acid transferase (245 aa).

It belongs to the glycosyltransferase 26 family.

The catalysed reaction is UDP-N-acetyl-alpha-D-mannosaminouronate + N-acetyl-alpha-D-glucosaminyl-di-trans,octa-cis-undecaprenyl diphosphate = beta-D-ManNAcA-(1-&gt;4)-alpha-D-GlcNAc-di-trans,octa-cis-undecaprenyl diphosphate + UDP + H(+). It participates in bacterial outer membrane biogenesis; enterobacterial common antigen biosynthesis. Its function is as follows. Catalyzes the synthesis of Und-PP-GlcNAc-ManNAcA (Lipid II), the second lipid-linked intermediate involved in enterobacterial common antigen (ECA) synthesis. In Proteus mirabilis (strain HI4320), this protein is UDP-N-acetyl-D-mannosaminuronic acid transferase.